The chain runs to 298 residues: MSNSWWEITVLCEPSLEETVFWRLEDFGCSGTATAKKQSSLEVKAYIPEIKAQLLDLEALSLWLKQDALILGFPEPVSHWQLMDEEDWASSWKQHWQISEIGDRFLICPAWLNPPENNQRLVIKIDPGSAFGTGTHPTTQLCLESLEMRLSSHPEPKIIADIGCGSGILAIGAILLGAKKVYAVDTDPLAVNATRSNRHLNRINPENLAINQGSVEELLELIPDGVDGIVCNILAETIIALMPEINRLAKPTTWGILSGILVTQAQAVTDILEPQGWTVAALWKRQEWCCLQIRRALD.

Positions 139, 163, 185, and 232 each coordinate S-adenosyl-L-methionine.

This sequence belongs to the methyltransferase superfamily. PrmA family.

It localises to the cytoplasm. It catalyses the reaction L-lysyl-[protein] + 3 S-adenosyl-L-methionine = N(6),N(6),N(6)-trimethyl-L-lysyl-[protein] + 3 S-adenosyl-L-homocysteine + 3 H(+). In terms of biological role, methylates ribosomal protein L11. This is Ribosomal protein L11 methyltransferase from Microcystis aeruginosa (strain NIES-843 / IAM M-2473).